The chain runs to 277 residues: Diaminopimelate epimerase (277 aa).

Substrate-binding residues include N13, Q46, and N66. The active-site Proton donor is C75. Substrate-binding positions include G76 to N77, N160, N193, and E211 to R212. C220 serves as the catalytic Proton acceptor. Residue G221–T222 participates in substrate binding.

The protein belongs to the diaminopimelate epimerase family. As to quaternary structure, homodimer.

It localises to the cytoplasm. The enzyme catalyses (2S,6S)-2,6-diaminopimelate = meso-2,6-diaminopimelate. It functions in the pathway amino-acid biosynthesis; L-lysine biosynthesis via DAP pathway; DL-2,6-diaminopimelate from LL-2,6-diaminopimelate: step 1/1. Functionally, catalyzes the stereoinversion of LL-2,6-diaminopimelate (L,L-DAP) to meso-diaminopimelate (meso-DAP), a precursor of L-lysine and an essential component of the bacterial peptidoglycan. In Saccharophagus degradans (strain 2-40 / ATCC 43961 / DSM 17024), this protein is Diaminopimelate epimerase.